The primary structure comprises 350 residues: MTYKITSLAGDGIGPEIMTSGLQVLEAVAKKYNHTFEIESHPFGGAGIDVAQDPIPSSTLKACRDADAILLGAIGGPKWDNAPKRPEDGLLALRKALGLFANIRPIQVPSSITHLSPLKKEIVENTDFVVVRELTGGLYFGEPKYWDNEAAVDSLTYTRAEIERIIEKAFEIAATRNKKVTSVDKANVLASSKLWRKIADEVASRHPDITLEHLYVDAAAMLMIQRPTTFDVIVTENLFGDILSDEASVITGSLGMLPSASHAENGPSLYEPIHGSAPDIANQNIANPMSMISSVSMMLRQSFSLFEEADAIDAATARTMQAGFLTADLGGNTSTTDFTNEVLKQIEGGE.

76–87 (GPKWDNAPKRPE) provides a ligand contact to NAD(+). Arg-94, Arg-104, Arg-132, and Asp-217 together coordinate substrate. Mg(2+) is bound by residues Asp-217, Asp-241, and Asp-245. 275-287 (GSAPDIANQNIAN) is a binding site for NAD(+).

It belongs to the isocitrate and isopropylmalate dehydrogenases family. LeuB type 1 subfamily. Homodimer. Requires Mg(2+) as cofactor. Mn(2+) serves as cofactor.

The protein resides in the cytoplasm. The enzyme catalyses (2R,3S)-3-isopropylmalate + NAD(+) = 4-methyl-2-oxopentanoate + CO2 + NADH. Its pathway is amino-acid biosynthesis; L-leucine biosynthesis; L-leucine from 3-methyl-2-oxobutanoate: step 3/4. Its function is as follows. Catalyzes the oxidation of 3-carboxy-2-hydroxy-4-methylpentanoate (3-isopropylmalate) to 3-carboxy-4-methyl-2-oxopentanoate. The product decarboxylates to 4-methyl-2 oxopentanoate. This is 3-isopropylmalate dehydrogenase from Listeria monocytogenes serotype 4b (strain F2365).